The following is a 305-amino-acid chain: Sulfate adenylyltransferase subunit 2 (305 aa).

It belongs to the PAPS reductase family. CysD subfamily. In terms of assembly, heterodimer composed of CysD, the smaller subunit, and CysN.

The catalysed reaction is sulfate + ATP + H(+) = adenosine 5'-phosphosulfate + diphosphate. The protein operates within sulfur metabolism; hydrogen sulfide biosynthesis; sulfite from sulfate: step 1/3. Functionally, with CysN forms the ATP sulfurylase (ATPS) that catalyzes the adenylation of sulfate producing adenosine 5'-phosphosulfate (APS) and diphosphate, the first enzymatic step in sulfur assimilation pathway. APS synthesis involves the formation of a high-energy phosphoric-sulfuric acid anhydride bond driven by GTP hydrolysis by CysN coupled to ATP hydrolysis by CysD. In Pseudomonas putida (strain ATCC 700007 / DSM 6899 / JCM 31910 / BCRC 17059 / LMG 24140 / F1), this protein is Sulfate adenylyltransferase subunit 2.